We begin with the raw amino-acid sequence, 37 residues long: Large ribosomal subunit protein bL36 (37 aa).

This sequence belongs to the bacterial ribosomal protein bL36 family.

This is Large ribosomal subunit protein bL36 from Paracidovorax citrulli (strain AAC00-1) (Acidovorax citrulli).